We begin with the raw amino-acid sequence, 440 residues long: Protein EFFECTOR OF TRANSCRIPTION (440 aa).

Positions 131-167 (SIQGLGVAVNIHDADDISHGQTESIRTRLRSYGRPVP) constitute a GIY-YIG domain. Residues 172 to 216 (LGDNASQTITQKKTGGRSKDKKHGFEEERDVSRVEAEENNTNSVH) are disordered. Residues 175-184 (NASQTITQKK) show a composition bias toward polar residues. Positions 194 to 207 (HGFEEERDVSRVEA) are enriched in basic and acidic residues. 2 Cx9Cx9RCx2HK repeats span residues 247-272 (CGVL…TEHK) and 295-320 (CGVI…EDHK). The tract at residues 339 to 363 (ILKEDKSKPKTRTSSTNQEEPGESL) is disordered. 2 Cx9Cx9RCx2HK repeats span residues 365–390 (CEAT…WQHK) and 409–434 (CGVK…QEHK).

It is found in the nucleus. Transcription regulator that negatively modulates gibberellin-mediated developmental processes. May act as transcriptional repressor of giberellin controlled genes. Binds DNA without sequence preference. This chain is Protein EFFECTOR OF TRANSCRIPTION, found in Brassica napus (Rape).